The primary structure comprises 95 residues: Aspartyl/glutamyl-tRNA(Asn/Gln) amidotransferase subunit C (95 aa).

This sequence belongs to the GatC family. As to quaternary structure, heterotrimer of A, B and C subunits.

It catalyses the reaction L-glutamyl-tRNA(Gln) + L-glutamine + ATP + H2O = L-glutaminyl-tRNA(Gln) + L-glutamate + ADP + phosphate + H(+). It carries out the reaction L-aspartyl-tRNA(Asn) + L-glutamine + ATP + H2O = L-asparaginyl-tRNA(Asn) + L-glutamate + ADP + phosphate + 2 H(+). Allows the formation of correctly charged Asn-tRNA(Asn) or Gln-tRNA(Gln) through the transamidation of misacylated Asp-tRNA(Asn) or Glu-tRNA(Gln) in organisms which lack either or both of asparaginyl-tRNA or glutaminyl-tRNA synthetases. The reaction takes place in the presence of glutamine and ATP through an activated phospho-Asp-tRNA(Asn) or phospho-Glu-tRNA(Gln). The polypeptide is Aspartyl/glutamyl-tRNA(Asn/Gln) amidotransferase subunit C (Gluconacetobacter diazotrophicus (strain ATCC 49037 / DSM 5601 / CCUG 37298 / CIP 103539 / LMG 7603 / PAl5)).